The sequence spans 854 residues: Alkaline phosphatase-like protein PglZ (854 aa).

This sequence belongs to the alkaline phosphatase superfamily.

In terms of biological role, BREX systems (bacteriophage exclusion) provide immunity against bacteriophage. A core protein of a type 1 BREX system. This system allows phage adsorption but prevents phage DNA replication, without degradation of the phage DNA. Methylation of bacterial DNA by PglX probably guides self/non-self discrimination. When the brxA-brxB-brxC-pglX and pglZ-brxL operons are transformed into a susceptible B.subtilis strain (BEST7003) they confer resistance to bacteriophages SPbeta, SP16, Zeta, phi3T and SP02 and partial protection to phages SP01 and SP82G (these include lytic and temperate phage). They do not protect against phages phi105, rho10 or rho14. Additionally confers a very slight reduction in efficiency of plasmid transformation. The chain is Alkaline phosphatase-like protein PglZ from Bacillus cereus (strain H3081.97).